The sequence spans 352 residues: Protein MGF 360-16R (352 aa).

It belongs to the asfivirus MGF 360 family.

Plays a role in virus cell tropism, and may be required for efficient virus replication in macrophages. The protein is Protein MGF 360-16R of African swine fever virus (isolate Tick/South Africa/Pretoriuskop Pr4/1996) (ASFV).